Here is a 354-residue protein sequence, read N- to C-terminus: Isocitrate dehydrogenase [NAD] regulatory subunit A, mitochondrial (354 aa).

Substrate contacts are provided by Ser-95, Asn-97, Arg-101, Arg-111, and Arg-132. Mg(2+) contacts are provided by Asp-219, Asp-243, and Asp-247. Residues 276–282 and Asn-289 contribute to the NADP(+) site; that span reads HGTAPDI.

It belongs to the isocitrate and isopropylmalate dehydrogenases family. Heterooligomer of catalytic and regulatory subunits. It depends on Mg(2+) as a cofactor. Mn(2+) serves as cofactor.

The protein resides in the mitochondrion. It catalyses the reaction D-threo-isocitrate + NAD(+) = 2-oxoglutarate + CO2 + NADH. Its function is as follows. Performs an essential role in the oxidative function of the citric acid cycle. This Dictyostelium discoideum (Social amoeba) protein is Isocitrate dehydrogenase [NAD] regulatory subunit A, mitochondrial (idhA).